We begin with the raw amino-acid sequence, 556 residues long: Glutamine--tRNA ligase (556 aa).

The 'HIGH' region motif lies at 34 to 44 (PEPNGYLHIGH). ATP-binding positions include 35-37 (EPN) and 41-47 (HIGHAKS). L-glutamine-binding residues include aspartate 67 and tyrosine 212. Residues threonine 231, 261-262 (RL), and 269-271 (MSK) each bind ATP. A 'KMSKS' region motif is present at residues 268 to 272 (VMSKR).

It belongs to the class-I aminoacyl-tRNA synthetase family. Monomer.

The protein localises to the cytoplasm. The catalysed reaction is tRNA(Gln) + L-glutamine + ATP = L-glutaminyl-tRNA(Gln) + AMP + diphosphate. In Vibrio parahaemolyticus serotype O3:K6 (strain RIMD 2210633), this protein is Glutamine--tRNA ligase.